A 188-amino-acid polypeptide reads, in one-letter code: Adenine phosphoribosyltransferase (188 aa).

This sequence belongs to the purine/pyrimidine phosphoribosyltransferase family. Homodimer.

It is found in the cytoplasm. It catalyses the reaction AMP + diphosphate = 5-phospho-alpha-D-ribose 1-diphosphate + adenine. Its pathway is purine metabolism; AMP biosynthesis via salvage pathway; AMP from adenine: step 1/1. Its function is as follows. Catalyzes a salvage reaction resulting in the formation of AMP, that is energically less costly than de novo synthesis. This chain is Adenine phosphoribosyltransferase, found in Burkholderia thailandensis (strain ATCC 700388 / DSM 13276 / CCUG 48851 / CIP 106301 / E264).